We begin with the raw amino-acid sequence, 150 residues long: Putative ribosome maturation factor RimP (150 aa).

Belongs to the RimP family.

The protein resides in the cytoplasm. Required for maturation of 30S ribosomal subunits. The sequence is that of Putative ribosome maturation factor RimP from Mycobacterium leprae (strain TN).